We begin with the raw amino-acid sequence, 171 residues long: Small ribosomal subunit protein uS5 (171 aa).

The region spanning 14–77 is the S5 DRBM domain; that stretch reads LKEKLVMVNR…EKAKKKLLKI (64 aa).

The protein belongs to the universal ribosomal protein uS5 family. As to quaternary structure, part of the 30S ribosomal subunit. Contacts proteins S4 and S8.

With S4 and S12 plays an important role in translational accuracy. In terms of biological role, located at the back of the 30S subunit body where it stabilizes the conformation of the head with respect to the body. This is Small ribosomal subunit protein uS5 from Karelsulcia muelleri (strain GWSS) (Sulcia muelleri).